The primary structure comprises 468 residues: tRNA threonylcarbamoyladenosine dehydratase (468 aa).

A run of 3 helical transmembrane segments spans residues 15-35 (FWIA…TLEF), 109-129 (NSFV…NMLA), and 315-335 (ILPV…TYVL).

This sequence belongs to the HesA/MoeB/ThiF family.

The protein resides in the mitochondrion outer membrane. Its function is as follows. Catalyzes the ATP-dependent dehydration of threonylcarbamoyladenosine at position 37 (t(6)A37) to form cyclic t(6)A37 (ct(6)A37) in tRNAs that read codons beginning with adenine. This chain is tRNA threonylcarbamoyladenosine dehydratase (tcd1), found in Schizosaccharomyces pombe (strain 972 / ATCC 24843) (Fission yeast).